The following is a 509-amino-acid chain: MFS antiporter QDR1 (509 aa).

Residues 1 to 41 (MPGNREEFDIEKVLKSKKLEAIETSTEKKAPYTVFESTDKL) lie on the Cytoplasmic side of the membrane. The chain crosses the membrane as a helical span at residues 42 to 62 (LLIIVLSLVGFWSAISSPIYF). At 63-75 (PALPTLTKYFNTT) the chain is on the extracellular side. A helical membrane pass occupies residues 76–96 (PSVMNISVVAYLIFQGIAPTI). Residues 97–106 (SSNLADTFGR) lie on the Cytoplasmic side of the membrane. Residues 107-129 (RPVILGSIIVFCAVCIAISQTNV) traverse the membrane as a helical segment. At 130-132 (YWL) the chain is on the extracellular side. A helical transmembrane segment spans residues 133-155 (LALLRCFQAAGIAPVFAISSGVA). Topologically, residues 156 to 169 (GDICTPANRGGMVG) are cytoplasmic. The helical transmembrane segment at 170–190 (AVSGLQLAGNGIGGLVGAALI) threads the bilayer. Residues 191 to 197 (SGFHTWR) are Extracellular-facing. The chain crosses the membrane as a helical span at residues 198–218 (AIFIFLAIGGGVTFIFAFLVL). Over 219-278 (AETSRRIVGNGSIRPKNVLNKAVLIYLPHFKNKITNDYSTLQPKGPFDILGPFKIFFQKE) the chain is Cytoplasmic. The chain crosses the membrane as a helical span at residues 279 to 299 (VFCTLLPSGMHFAAWTVSLTS). The Extracellular portion of the chain corresponds to 300-312 (LSTELESAKYNYS). Residues 313-333 (VMKVGLVYLPQGIACFIGSLI) traverse the membrane as a helical segment. The Cytoplasmic portion of the chain corresponds to 334-370 (AGRCLNWYYRYRKNLYDKQMNDVPLNDRPPFNLVASR). The helical transmembrane segment at 371-391 (LTLTIVPLAMMVIGLSAFGWC) threads the bilayer. Over 392-397 (LEYKKP) the chain is Extracellular. Residues 398–418 (IISIIISTILISFSASVMMSI) form a helical membrane-spanning segment. Topologically, residues 419–432 (CTTMLVDLYPKQSG) are cytoplasmic. A helical membrane pass occupies residues 433 to 453 (ASASCVNLMRCWLAALFTGVL). The Extracellular segment spans residues 454–455 (DK). A helical membrane pass occupies residues 456–476 (IISALGLGGTYTLLTGICLLT). The Cytoplasmic portion of the chain corresponds to 477-509 (DLGLVYVLYTANQRFVNYVSPNQTAVNSDAEDY).

Belongs to the major facilitator superfamily. CAR1 family.

The protein resides in the cell membrane. Its function is as follows. MFS antiporter that does not display functional linkage as drug transporter and performs functions that significantly affect biofilm development and virulence. No substrate for transport has been identified yet, but plays an important role in the growth in the host. In Candida albicans (strain SC5314 / ATCC MYA-2876) (Yeast), this protein is MFS antiporter QDR1 (QDR).